The following is an 811-amino-acid chain: Probable potassium transporter 16 (811 aa).

Over 1–66 (MAQQQAGARG…GQESWMRTLR (66 aa)) the chain is Cytoplasmic. Residues 67 to 87 (LGFQCVGILHADLGTSPLYVY) form a helical membrane-spanning segment. The Extracellular segment spans residues 88–100 (QNTFKYGIKHEDD). Residues 101-121 (IIGVLSLIIYSFVLFTMVKIV) traverse the membrane as a helical segment. The Cytoplasmic segment spans residues 122 to 190 (FIALHANDDG…KSQLEKKPAK (69 aa)). The chain crosses the membrane as a helical span at residues 191–211 (IAVFFLTIFATALAISDCVLN). Residues 212 to 228 (PSVSVLSAVNGLKLRAP) are Extracellular-facing. A helical transmembrane segment spans residues 229–249 (HLTTDEVVWITVGILVVFFAV). At 250–256 (QRFGTDK) the chain is on the cytoplasmic side. Residues 257 to 277 (IGYTFAPVVVVWLLLISGIGI) traverse the membrane as a helical segment. Topologically, residues 278 to 310 (YDLVKYDVGVLRAFNPKYIIDYFRRNKKDGWVQ) are extracellular. A helical transmembrane segment spans residues 311–331 (LGEVLLTFTGTEALFADLGYF). Residues 332 to 337 (SIKSIQ) lie on the Cytoplasmic side of the membrane. Residues 338–358 (LSSTFVLLPSVLCTYIGQAAY) form a helical membrane-spanning segment. Topologically, residues 359–379 (LRKHMDQQHIQNAFFNSIPRP) are extracellular. A helical transmembrane segment spans residues 380–400 (LFWPMFVLAIMTSVIGCQAMV). Topologically, residues 401-438 (SCAFATMSHLQTLNCFPRIKILHTSRRYSGQLYSPEVN) are cytoplasmic. A helical membrane pass occupies residues 439 to 459 (FFLCLLSCVITLSFRTTGFIV). Topologically, residues 460–463 (KAHE) are extracellular. Residues 464 to 484 (ICVVLVMVITTILMTIVMLLV) form a helical membrane-spanning segment. The Cytoplasmic segment spans residues 485 to 488 (WKVN). The helical transmembrane segment at 489–509 (IWWIVLFFVVFMSTETVYLSA) threads the bilayer. The Extracellular portion of the chain corresponds to 510 to 519 (VLYKFTKGPY). Residues 520-540 (MPLAMSAVLMVIMFVWHYVHV) traverse the membrane as a helical segment. Over 541–811 (KRYKFELEHT…LLKVGITYEI (271 aa)) the chain is Cytoplasmic.

The protein belongs to the HAK/KUP transporter (TC 2.A.72.3) family.

The protein localises to the membrane. In terms of biological role, high-affinity potassium transporter. The chain is Probable potassium transporter 16 (HAK16) from Oryza sativa subsp. japonica (Rice).